The sequence spans 1091 residues: Neural cell adhesion molecule 1 (1091 aa).

The signal sequence occupies residues M1–S19. Ig-like C2-type domains are found at residues L20–K113, Q116–Q205, P212–H301, P308–Q403, and P406–V495. Topologically, residues L20–T711 are extracellular. Cystine bridges form between C41–C96 and C139–C189. Heparin is bound by residues K152 to R156 and K161 to R165. N222 carries an N-linked (GlcNAc...) asparagine glycan. C235 and C287 are disulfide-bonded. Residues N315, N347, N423, N449, and N478 are each glycosylated (N-linked (GlcNAc...) asparagine). A disulfide bridge connects residues C329 and C385. Residues C426 and C479 are joined by a disulfide bond. Fibronectin type-III domains follow at residues T499–V598 and E600–P696. The chain crosses the membrane as a helical span at residues A712 to V729. Topologically, residues D730–K1091 are cytoplasmic. 4 disordered regions span residues G756–E809, A840–S916, E937–K1023, and T1041–K1091. Over residues K758–P799 the composition is skewed to basic and acidic residues. Residues S845 to S856 are compositionally biased toward low complexity. 2 stretches are compositionally biased toward polar residues: residues D904 to S916 and Q980 to N1012. Composition is skewed to basic and acidic residues over residues E1013–K1023 and K1068–K1091.

Polysialylated by ST8SIA2 and ST8SIA4. Polysialylation modulates cell interactions by confering both attractive and repulsive properties that are highly regulated by ST8SIA2 and ST8SIA4. Polysialylation is formed on a-2,3-linked sialic acid of core glycans.

The protein localises to the cell membrane. This protein is a cell adhesion molecule involved in neuron-neuron adhesion, neurite fasciculation, outgrowth of neurites, etc. The sequence is that of Neural cell adhesion molecule 1 from Gallus gallus (Chicken).